The following is a 412-amino-acid chain: Multifunctional CCA protein (412 aa).

2 residues coordinate ATP: Gly8 and Arg11. Positions 8 and 11 each coordinate CTP. Mg(2+)-binding residues include Asp21 and Asp23. ATP is bound by residues Arg91, Arg137, and Arg140. Arg91, Arg137, and Arg140 together coordinate CTP. The HD domain maps to 228 to 329 (TGIHTLMTLS…VKLFDSIDAW (102 aa)).

This sequence belongs to the tRNA nucleotidyltransferase/poly(A) polymerase family. Bacterial CCA-adding enzyme type 1 subfamily. In terms of assembly, monomer. Can also form homodimers and oligomers. Mg(2+) is required as a cofactor. Ni(2+) serves as cofactor.

The enzyme catalyses a tRNA precursor + 2 CTP + ATP = a tRNA with a 3' CCA end + 3 diphosphate. The catalysed reaction is a tRNA with a 3' CCA end + 2 CTP + ATP = a tRNA with a 3' CCACCA end + 3 diphosphate. Functionally, catalyzes the addition and repair of the essential 3'-terminal CCA sequence in tRNAs without using a nucleic acid template. Adds these three nucleotides in the order of C, C, and A to the tRNA nucleotide-73, using CTP and ATP as substrates and producing inorganic pyrophosphate. tRNA 3'-terminal CCA addition is required both for tRNA processing and repair. Also involved in tRNA surveillance by mediating tandem CCA addition to generate a CCACCA at the 3' terminus of unstable tRNAs. While stable tRNAs receive only 3'-terminal CCA, unstable tRNAs are marked with CCACCA and rapidly degraded. The sequence is that of Multifunctional CCA protein from Escherichia coli O81 (strain ED1a).